The sequence spans 255 residues: 3-deoxy-manno-octulosonate cytidylyltransferase (255 aa).

It belongs to the KdsB family.

It localises to the cytoplasm. The enzyme catalyses 3-deoxy-alpha-D-manno-oct-2-ulosonate + CTP = CMP-3-deoxy-beta-D-manno-octulosonate + diphosphate. It functions in the pathway nucleotide-sugar biosynthesis; CMP-3-deoxy-D-manno-octulosonate biosynthesis; CMP-3-deoxy-D-manno-octulosonate from 3-deoxy-D-manno-octulosonate and CTP: step 1/1. It participates in bacterial outer membrane biogenesis; lipopolysaccharide biosynthesis. Functionally, activates KDO (a required 8-carbon sugar) for incorporation into bacterial lipopolysaccharide in Gram-negative bacteria. This Glaesserella parasuis serovar 5 (strain SH0165) (Haemophilus parasuis) protein is 3-deoxy-manno-octulosonate cytidylyltransferase.